A 234-amino-acid chain; its full sequence is Phosphoribosylaminoimidazole-succinocarboxamide synthase (234 aa).

Belongs to the SAICAR synthetase family.

The enzyme catalyses 5-amino-1-(5-phospho-D-ribosyl)imidazole-4-carboxylate + L-aspartate + ATP = (2S)-2-[5-amino-1-(5-phospho-beta-D-ribosyl)imidazole-4-carboxamido]succinate + ADP + phosphate + 2 H(+). Its pathway is purine metabolism; IMP biosynthesis via de novo pathway; 5-amino-1-(5-phospho-D-ribosyl)imidazole-4-carboxamide from 5-amino-1-(5-phospho-D-ribosyl)imidazole-4-carboxylate: step 1/2. This Streptococcus uberis (strain ATCC BAA-854 / 0140J) protein is Phosphoribosylaminoimidazole-succinocarboxamide synthase.